A 120-amino-acid polypeptide reads, in one-letter code: Spermidine export protein MdtJ (120 aa).

4 consecutive transmembrane segments (helical) span residues 1-21 (MFYWILLALAIIAEITGTLSM), 31-51 (TGFILMLAMIALSYIFLAFAV), 54-74 (IALGVAYALWEGIGILLITLF), and 81-101 (ESLSLLKIAGLTTLVIGIVLI).

The protein belongs to the drug/metabolite transporter (DMT) superfamily. Small multidrug resistance (SMR) (TC 2.A.7.1) family. MdtJ subfamily. As to quaternary structure, forms a complex with MdtI.

It localises to the cell inner membrane. Catalyzes the excretion of spermidine. This Klebsiella pneumoniae subsp. pneumoniae (strain ATCC 700721 / MGH 78578) protein is Spermidine export protein MdtJ.